Reading from the N-terminus, the 453-residue chain is Bis(5'-adenosyl)-triphosphatase ENPP4 (453 aa).

Positions 1–15 are cleaved as a signal peptide; it reads MKLLVILLFSGLITG. The Extracellular segment spans residues 16 to 407; it reads FRSDSSSSLP…DQWCINLPEA (392 aa). Zn(2+)-binding residues include Asp34 and Thr70. Thr70 (AMP-threonine intermediate) is an active-site residue. Substrate contacts are provided by Asn91 and Tyr154. N-linked (GlcNAc...) asparagine glycans are attached at residues Asn155 and Asn166. Zn(2+)-binding residues include Asp189, His193, Asp237, and His238. Asp189 serves as a coordination point for substrate. An intrachain disulfide couples Cys254 to Cys287. N-linked (GlcNAc...) asparagine glycosylation occurs at Asn276. Residue His336 participates in Zn(2+) binding. Asn386 is a glycosylation site (N-linked (GlcNAc...) asparagine). An intrachain disulfide couples Cys394 to Cys401. A helical transmembrane segment spans residues 408–428; the sequence is IAIVIGSLLVLTMLTCLIIIM. Residues 429-453 are Cytoplasmic-facing; that stretch reads QNRLSVPRPFSRLQLQEDDDDPLIG.

This sequence belongs to the nucleotide pyrophosphatase/phosphodiesterase family. Zn(2+) serves as cofactor. In terms of tissue distribution, expressed on the surface of vascular endothelia.

The protein localises to the cell membrane. The enzyme catalyses P(1),P(3)-bis(5'-adenosyl) triphosphate + H2O = AMP + ADP + 2 H(+). Hydrolyzes extracellular Ap3A into AMP and ADP, and Ap4A into AMP and ATP. Ap3A and Ap4A are diadenosine polyphosphates thought to induce proliferation of vascular smooth muscle cells. Acts as a procoagulant, mediating platelet aggregation at the site of nascent thrombus via release of ADP from Ap3A and activation of ADP receptors. In Homo sapiens (Human), this protein is Bis(5'-adenosyl)-triphosphatase ENPP4 (ENPP4).